Consider the following 449-residue polypeptide: 23S rRNA (uracil(1939)-C(5))-methyltransferase RlmD (449 aa).

The region spanning 12 to 70 (SKQLSAKQSFSVHQLDHLGAGIAQHQGKVVFIPGALPNETVQAQLTEQKKNYARAKLIK) is the TRAM domain. Residues C83, C89, C92, and C170 each contribute to the [4Fe-4S] cluster site. 6 residues coordinate S-adenosyl-L-methionine: Q282, F311, N316, E332, D359, and D379. C405 serves as the catalytic Nucleophile.

It belongs to the class I-like SAM-binding methyltransferase superfamily. RNA M5U methyltransferase family. RlmD subfamily.

The enzyme catalyses uridine(1939) in 23S rRNA + S-adenosyl-L-methionine = 5-methyluridine(1939) in 23S rRNA + S-adenosyl-L-homocysteine + H(+). In terms of biological role, catalyzes the formation of 5-methyl-uridine at position 1939 (m5U1939) in 23S rRNA. The protein is 23S rRNA (uracil(1939)-C(5))-methyltransferase RlmD of Shewanella sp. (strain ANA-3).